Reading from the N-terminus, the 105-residue chain is Biogenesis of lysosome-related organelles complex 1 subunit SNN1 (105 aa).

The stretch at 70 to 105 (WKDDNERLDSLRKRVDSLKSRFQSLKLRSDKLEQRE) forms a coiled coil.

This sequence belongs to the SNAPIN family. As to quaternary structure, component of the biogenesis of lysosome-related organelles complex-1 (BLOC-1).

The protein localises to the endosome. Component of the biogenesis of lysosome-related organelles complex-1 (BLOC-1), a complex involved in endosomal cargo sorting. The chain is Biogenesis of lysosome-related organelles complex 1 subunit SNN1 (SNN1) from Zygosaccharomyces rouxii (strain ATCC 2623 / CBS 732 / NBRC 1130 / NCYC 568 / NRRL Y-229).